We begin with the raw amino-acid sequence, 679 residues long: Single-strand DNA endonuclease ASTE1 (679 aa).

Residues 351–400 are interaction with SHLD2; sequence TILPTQVENMQQPNAHRISQPIRQIIYGLLLNASPHLDKTSWNALPPQPL. The segment at 625 to 645 is disordered; it reads RSNSKKKRQKKQNTSCSKNRG. Basic residues predominate over residues 626-635; sequence SNSKKKRQKK.

Belongs to the asteroid family. Interacts with SHLD1, SHLD2, SHLD3, RIF1 and MAD2L2/REV7.

In terms of biological role, structure-specific DNA endonuclease that specifically cleaves single-stranded DNA and 3' overhang DNA. Contributes to the control of DNA double-strand break repair choice by antagonizing BRCA1-dependent homologous recombination (HR) and promoting non-homologous end-joining (NHEJ). Recruited to the single-stranded DNA ends by SHLD2 and cleaves the 3' exposed DNA ends, therefore inhibiting DNA end resection (necessary for HR) and promoting DNA end protection (necessary for NHEJ). In Homo sapiens (Human), this protein is Single-strand DNA endonuclease ASTE1 (ASTE1).